A 51-amino-acid chain; its full sequence is Lantibiotic streptococcin A-M49 (51 aa).

The propeptide occupies 1–25 (MTKEHEIINSIQEVSLEELDQIIGA). 2 consecutive cross-links (beta-methyllanthionine (Thr-Cys)) follow at residues 33-38 (TISHEC) and 42-50 (TWAFLATCC). The lanthionine (Ser-Cys) cross-link spans 35–49 (SHECHLNTWAFLATC). The residue at position 48 (Thr-48) is a 2,3-didehydrobutyrine.

Belongs to the type A lantibiotic family. In terms of processing, maturation of lantibiotics involves the enzymatic conversion of Thr, and Ser into dehydrated AA and the formation of thioether bonds with cysteine. This is followed by membrane translocation and cleavage of the modified precursor.

It is found in the secreted. The protein resides in the cell surface. Functionally, lanthionine-containing peptide antibiotic (lantibiotic) active on certain Gram-positive bacteria. The bactericidal activity of lantibiotics is based on depolarization of energized bacterial cytoplasmic membranes, initiated by the formation of aqueous transmembrane pores. This is Lantibiotic streptococcin A-M49 (scnA') from Streptococcus pyogenes serotype M49.